Here is a 453-residue protein sequence, read N- to C-terminus: DDB1- and CUL4-associated factor 12 (453 aa).

Positions 1-12 are enriched in basic residues; sequence MARKAVSRKRKA. The segment at 1–27 is disordered; sequence MARKAVSRKRKAPALPGAGSDAQDPQF. The required for nuclear location and interaction with MOV10 stretch occupies residues 1–38; the sequence is MARKAVSRKRKAPALPGAGSDAQDPQFGWDHSLHKRKR. 4 WD repeats span residues 138–178, 182–220, 250–289, and 338–375; these read QQGC…PVCV, GHKD…LTKS, PDNC…SKLL, and ERGS…FLEE.

Belongs to the WD repeat DCAF12 family. Component of the DCX(DCAF12) E3 ubiquitin ligase complex, at least composed of CUL4 (CUL4A or CUL4B), DDB1, DCAF12 and RBX1.

It localises to the cytoplasm. Its subcellular location is the cytoskeleton. It is found in the microtubule organizing center. The protein resides in the centrosome. The protein localises to the nucleus. Its pathway is protein modification; protein ubiquitination. Its function is as follows. Substrate-recognition component of a DCX (DDB1-CUL4-X-box) E3 ubiquitin-protein ligase complex of the DesCEND (destruction via C-end degrons) pathway, which recognizes a C-degron located at the extreme C terminus of target proteins, leading to their ubiquitination and degradation. The C-degron recognized by the DesCEND pathway is usually a motif of less than ten residues and can be present in full-length proteins, truncated proteins or proteolytically cleaved forms. The DCX(DCAF12) complex specifically recognizes proteins with a diglutamate (Glu-Glu) at the C-terminus, such as MAGEA3, MAGEA6 and CCT5, leading to their ubiquitination and degradation. Ubiquitination of MAGEA3, MAGEA6 by DCX(DCAF12) complex is required for starvation-induced autophagy. Also directly recognizes the C-terminal glutamate-leucine (Glu-Leu) degron as an alternative degron in proteins such as MOV10, leading to their ubiquitination and degradation. Controls the protein level of MOV10 during spermatogenesis and in T cells, especially after their activation. In Bos taurus (Bovine), this protein is DDB1- and CUL4-associated factor 12 (DCAF12).